The chain runs to 375 residues: Queuine tRNA-ribosyltransferase (375 aa).

The Proton acceptor role is filled by Asp-89. Substrate is bound by residues 89 to 93 (DSGGF), Asp-143, Gln-187, and Gly-214. The interval 245–251 (GVGKPED) is RNA binding. Residue Asp-264 is the Nucleophile of the active site. The tract at residues 269-273 (TRNAR) is RNA binding; important for wobble base 34 recognition. Zn(2+)-binding residues include Cys-302, Cys-304, Cys-307, and His-333.

Belongs to the queuine tRNA-ribosyltransferase family. As to quaternary structure, homodimer. Within each dimer, one monomer is responsible for RNA recognition and catalysis, while the other monomer binds to the replacement base PreQ1. Requires Zn(2+) as cofactor.

The catalysed reaction is 7-aminomethyl-7-carbaguanine + guanosine(34) in tRNA = 7-aminomethyl-7-carbaguanosine(34) in tRNA + guanine. Its pathway is tRNA modification; tRNA-queuosine biosynthesis. Functionally, catalyzes the base-exchange of a guanine (G) residue with the queuine precursor 7-aminomethyl-7-deazaguanine (PreQ1) at position 34 (anticodon wobble position) in tRNAs with GU(N) anticodons (tRNA-Asp, -Asn, -His and -Tyr). Catalysis occurs through a double-displacement mechanism. The nucleophile active site attacks the C1' of nucleotide 34 to detach the guanine base from the RNA, forming a covalent enzyme-RNA intermediate. The proton acceptor active site deprotonates the incoming PreQ1, allowing a nucleophilic attack on the C1' of the ribose to form the product. After dissociation, two additional enzymatic reactions on the tRNA convert PreQ1 to queuine (Q), resulting in the hypermodified nucleoside queuosine (7-(((4,5-cis-dihydroxy-2-cyclopenten-1-yl)amino)methyl)-7-deazaguanosine). The sequence is that of Queuine tRNA-ribosyltransferase from Escherichia coli O81 (strain ED1a).